Consider the following 196-residue polypeptide: GTP cyclohydrolase 1 (196 aa).

3 residues coordinate Zn(2+): C84, H87, and C157.

This sequence belongs to the GTP cyclohydrolase I family. Toroid-shaped homodecamer, composed of two pentamers of five dimers.

The enzyme catalyses GTP + H2O = 7,8-dihydroneopterin 3'-triphosphate + formate + H(+). Its pathway is cofactor biosynthesis; 7,8-dihydroneopterin triphosphate biosynthesis; 7,8-dihydroneopterin triphosphate from GTP: step 1/1. This is GTP cyclohydrolase 1 from Corynebacterium glutamicum (strain ATCC 13032 / DSM 20300 / JCM 1318 / BCRC 11384 / CCUG 27702 / LMG 3730 / NBRC 12168 / NCIMB 10025 / NRRL B-2784 / 534).